The sequence spans 614 residues: Putative amino acid transporter AAT1 (614 aa).

The next 11 membrane-spanning stretches (helical) occupy residues 184 to 216 (VLFL…LILL), 222 to 243 (YITT…YGNL), 255 to 275 (LIDF…LILV), 295 to 311 (RIFI…PLTF), 318 to 340 (INCF…GYQS), 360 to 380 (HFFK…NACF), 401 to 417 (ILIQ…LGYL), 437 to 459 (SILL…NFIA), 531 to 547 (CAAI…EFNV), 553 to 575 (FIGI…LIYY), and 587 to 613 (RYAT…FIII).

Belongs to the amino acid/polyamine transporter 2 family.

It is found in the vacuole membrane. Putative amino acid transporter. Involved in maintaining the osmotic homeostasis of the digestive vacuole. Important for the timely development and growth of the asexual-stage parasites and male gametocyte maturation. The protein is Putative amino acid transporter AAT1 of Plasmodium berghei (strain Anka).